Here is a 246-residue protein sequence, read N- to C-terminus: Small ribosomal subunit protein uS2 (246 aa).

Residues 226 to 246 (QGEEEAEVAEETAPETETTTA) are disordered. Residues 229–239 (EEAEVAEETAP) are compositionally biased toward acidic residues.

Belongs to the universal ribosomal protein uS2 family. In terms of assembly, part of the 30S ribosomal subunit. Interacts with BrxC.

The chain is Small ribosomal subunit protein uS2 (rpsB) from Bacillus subtilis (strain 168).